A 374-amino-acid chain; its full sequence is Alanine racemase (374 aa).

Lys44 acts as the Proton acceptor; specific for D-alanine in catalysis. Lys44 is subject to N6-(pyridoxal phosphate)lysine. Arg139 is a binding site for substrate. The active-site Proton acceptor; specific for L-alanine is the Tyr269. Met317 contributes to the substrate binding site.

It belongs to the alanine racemase family. It depends on pyridoxal 5'-phosphate as a cofactor.

It catalyses the reaction L-alanine = D-alanine. Its pathway is amino-acid biosynthesis; D-alanine biosynthesis; D-alanine from L-alanine: step 1/1. Catalyzes the interconversion of L-alanine and D-alanine. May also act on other amino acids. The chain is Alanine racemase (alr) from Bordetella avium (strain 197N).